The sequence spans 84 residues: Gas vesicle protein M1 (84 aa).

The tract at residues 1 to 25 (MEPTKDETHAIVEFVDVLLRDGAVI) is interacts with GvpL1. Positions 5–21 (KDETHAIVEFVDVLLRD) are alpha helix 1. Beta-strand regions lie at residues 27–29 (ADV) and 41–43 (ISL). Residues 44-48 (RAAIA) carry the Conserved in GvpJ1/2 but not GvpA motif. 2 alpha helix regions span residues 46-56 (AIAGMTTMTEY) and 62-84 (WDAA…RRED).

The protein belongs to the gas vesicle GvpA family. In terms of assembly, gvpF to GvpM interact with each other in vitro, and may form multi-subunit complex(es). Might interact with GvpA1.

The protein resides in the gas vesicle. Proteins GvpF to GvpM might be involved in nucleating gas vesicle formation. A minor component of the gas vesicle. Gas vesicles are hollow, gas filled proteinaceous nanostructures found in several microbial planktonic microorganisms. They allow positioning of halobacteria at the optimal depth for growth in the poorly aerated, shallow brine pools of their habitat. Functionally, expression of a 9.5 kb p-vac DNA fragment containing 2 divergently transcribed regions (gvpD-gvpE-gvpF-gvpG-gvpH-gvpI-gvpJ-gvpK-gvpL-gvpM and gvpA-gvpC-gvpN-gvpO) allows H.volcanii to produce gas vesicles. All site-directed mutagenesis is tested in H.volcanii. A minimal gas vesicle can be made in H.volcanii by gvpA1-gvpO1 plus gvpF1-gvpG1-gvpJ1-gvpK1-gvpL1-gvpM1; lack of enough GvpJ1 prevents formation. A similar region restores gas vesicle production in H.halobium without the p-vac locus, but it still has the c-vac locus. This is Gas vesicle protein M1 (gvpM11) from Halobacterium salinarum (strain ATCC 700922 / JCM 11081 / NRC-1) (Halobacterium halobium).